The primary structure comprises 191 residues: Large ribosomal subunit protein uL5 (191 aa).

It belongs to the universal ribosomal protein uL5 family. As to quaternary structure, part of the 50S ribosomal subunit; part of the 5S rRNA/L5/L18/L25 subcomplex. Contacts the 5S rRNA and the P site tRNA. Forms a bridge to the 30S subunit in the 70S ribosome.

Functionally, this is one of the proteins that bind and probably mediate the attachment of the 5S RNA into the large ribosomal subunit, where it forms part of the central protuberance. In the 70S ribosome it contacts protein S13 of the 30S subunit (bridge B1b), connecting the 2 subunits; this bridge is implicated in subunit movement. Contacts the P site tRNA; the 5S rRNA and some of its associated proteins might help stabilize positioning of ribosome-bound tRNAs. In Corynebacterium glutamicum (strain R), this protein is Large ribosomal subunit protein uL5.